A 202-amino-acid polypeptide reads, in one-letter code: Large ribosomal subunit protein bL25 (202 aa).

It belongs to the bacterial ribosomal protein bL25 family. CTC subfamily. In terms of assembly, part of the 50S ribosomal subunit; part of the 5S rRNA/L5/L18/L25 subcomplex. Contacts the 5S rRNA. Binds to the 5S rRNA independently of L5 and L18.

In terms of biological role, this is one of the proteins that binds to the 5S RNA in the ribosome where it forms part of the central protuberance. The protein is Large ribosomal subunit protein bL25 of Rickettsia bellii (strain OSU 85-389).